A 210-amino-acid chain; its full sequence is N-(5'-phosphoribosyl)anthranilate isomerase (210 aa).

The protein belongs to the TrpF family.

The enzyme catalyses N-(5-phospho-beta-D-ribosyl)anthranilate = 1-(2-carboxyphenylamino)-1-deoxy-D-ribulose 5-phosphate. The protein operates within amino-acid biosynthesis; L-tryptophan biosynthesis; L-tryptophan from chorismate: step 3/5. In Staphylococcus aureus (strain MRSA252), this protein is N-(5'-phosphoribosyl)anthranilate isomerase.